We begin with the raw amino-acid sequence, 128 residues long: Small ribosomal subunit protein uS14m (128 aa).

This sequence belongs to the universal ribosomal protein uS14 family. In terms of assembly, component of the mitochondrial ribosome small subunit (28S) which comprises a 12S rRNA and about 30 distinct proteins. Interacts with LIAT1.

The protein localises to the mitochondrion. The protein is Small ribosomal subunit protein uS14m (Mrps14) of Mus musculus (Mouse).